The sequence spans 112 residues: CENP-A recruiting complex protein mis19 (112 aa).

As to quaternary structure, component of the CENP-A recruiting complex composed of at least mis16, mis19, mis19 and mis20.

It localises to the chromosome. Its subcellular location is the centromere. The protein resides in the kinetochore. Its function is as follows. Component of the CENP-A recruiting complex that ensures the integrity of mitotic spindles through maintenance of kinetochore factors mis6/CENP-I and cnp1/CENP-A. Links mis16 and mis18 to recruit CENP-A through interacting with non-sense-mediated mRNA decay (NMD) factors and the SWI/SNF complex. Also links mis18 with the CCAN/mis6/ctf19 complex to promote CENP-A assembly. This chain is CENP-A recruiting complex protein mis19, found in Schizosaccharomyces pombe (strain 972 / ATCC 24843) (Fission yeast).